The following is a 467-amino-acid chain: Sugar transporter ERD6-like 11 (467 aa).

The next 12 helical transmembrane spans lie at 26 to 46 (ITAC…SYGC), 75 to 95 (FLNV…VILG), 105 to 125 (FFCV…WLDL), 128 to 148 (ISLG…IAEI), 155 to 177 (GAFT…FFGT), 183 to 203 (VMAV…FFIP), 266 to 286 (LVVG…GITY), 301 to 321 (LGSM…LILV), 328 to 348 (PLLL…GVSF), 359 to 379 (LIPI…AFGI), 402 to 422 (IVAL…NFMF), and 428 to 448 (GTFY…WMLV).

This sequence belongs to the major facilitator superfamily. Sugar transporter (TC 2.A.1.1) family.

Its subcellular location is the membrane. In terms of biological role, sugar transporter. This is Sugar transporter ERD6-like 11 from Arabidopsis thaliana (Mouse-ear cress).